We begin with the raw amino-acid sequence, 100 residues long: Urease subunit gamma (100 aa).

The protein belongs to the urease gamma subunit family. In terms of assembly, heterotrimer of UreA (gamma), UreB (beta) and UreC (alpha) subunits. Three heterotrimers associate to form the active enzyme.

The protein resides in the cytoplasm. The catalysed reaction is urea + 2 H2O + H(+) = hydrogencarbonate + 2 NH4(+). The protein operates within nitrogen metabolism; urea degradation; CO(2) and NH(3) from urea (urease route): step 1/1. The polypeptide is Urease subunit gamma (Azoarcus sp. (strain BH72)).